A 586-amino-acid chain; its full sequence is Acyl-coenzyme A synthetase ACSM3, mitochondrial (586 aa).

Residues 1 to 27 (MLARVTRKMLRHAKCFQRLAIFGSVRA) constitute a mitochondrion transit peptide. N6-succinyllysine is present on residues Lys-73 and Lys-106. Lys-157 bears the N6-acetyllysine mark. ATP contacts are provided by residues 235–243 (TSGTSGYPK), 374–379 (EGYGQT), Asp-461, Arg-476, and Lys-572.

Belongs to the ATP-dependent AMP-binding enzyme family. Mg(2+) is required as a cofactor. The cofactor is Mn(2+).

Its subcellular location is the mitochondrion. It localises to the mitochondrion matrix. The catalysed reaction is a medium-chain fatty acid + ATP + CoA = a medium-chain fatty acyl-CoA + AMP + diphosphate. It carries out the reaction propanoate + ATP + CoA = propanoyl-CoA + AMP + diphosphate. It catalyses the reaction butanoate + ATP + CoA = butanoyl-CoA + AMP + diphosphate. The enzyme catalyses 2-methylpropanoate + ATP + CoA = 2-methylpropanoyl-CoA + AMP + diphosphate. The catalysed reaction is 2-methylbutanoate + ATP + CoA = 2-methylbutanoyl-CoA + AMP + diphosphate. It carries out the reaction octanoate + ATP + CoA = octanoyl-CoA + AMP + diphosphate. In terms of biological role, catalyzes the activation of fatty acids by CoA to produce an acyl-CoA, the first step in fatty acid metabolism. Capable of activating medium-chain fatty acids with a preference for isobutyrate among fatty acids with 2-6 carbon atoms. The chain is Acyl-coenzyme A synthetase ACSM3, mitochondrial (ACSM3) from Homo sapiens (Human).